The chain runs to 311 residues: N-acetylmuramic acid 6-phosphate etherase (311 aa).

The region spanning 66–229 is the SIS domain; sequence VAVRMARGGR…STITMIRLGK (164 aa). The active-site Proton donor is Glu-94. The active site involves Glu-125.

This sequence belongs to the GCKR-like family. MurNAc-6-P etherase subfamily. As to quaternary structure, homodimer.

The enzyme catalyses N-acetyl-D-muramate 6-phosphate + H2O = N-acetyl-D-glucosamine 6-phosphate + (R)-lactate. Its pathway is amino-sugar metabolism; N-acetylmuramate degradation. Specifically catalyzes the cleavage of the D-lactyl ether substituent of MurNAc 6-phosphate, producing GlcNAc 6-phosphate and D-lactate. This is N-acetylmuramic acid 6-phosphate etherase from Streptomyces coelicolor (strain ATCC BAA-471 / A3(2) / M145).